Consider the following 247-residue polypeptide: Small ribosomal subunit protein uS2 (247 aa).

The protein belongs to the universal ribosomal protein uS2 family.

This chain is Small ribosomal subunit protein uS2, found in Halorhodospira halophila (strain DSM 244 / SL1) (Ectothiorhodospira halophila (strain DSM 244 / SL1)).